The primary structure comprises 565 residues: NAD-dependent malic enzyme (565 aa).

Y104 functions as the Proton donor in the catalytic mechanism. Residue R157 participates in NAD(+) binding. K175 (proton acceptor) is an active-site residue. Positions 246, 247, and 270 each coordinate a divalent metal cation. Positions 270 and 418 each coordinate NAD(+).

This sequence belongs to the malic enzymes family. As to quaternary structure, homotetramer. The cofactor is Mg(2+). Mn(2+) serves as cofactor.

The enzyme catalyses (S)-malate + NAD(+) = pyruvate + CO2 + NADH. It catalyses the reaction oxaloacetate + H(+) = pyruvate + CO2. The sequence is that of NAD-dependent malic enzyme from Erwinia tasmaniensis (strain DSM 17950 / CFBP 7177 / CIP 109463 / NCPPB 4357 / Et1/99).